A 222-amino-acid polypeptide reads, in one-letter code: uncharacterized protein (222 aa).

A disordered region spans residues 142–222 (ARRGGCVHPP…LPDPPSAGHL (81 aa)). A compositionally biased stretch (low complexity) spans 160–169 (QSRSISSRRA). Residues 182-196 (PRRRPHRHRTRPQTR) show a composition bias toward basic residues.

The protein belongs to the Rv1128c/1148c/1588c/1702c/1945/3466 family.

This is an uncharacterized protein from Mycobacterium tuberculosis (strain CDC 1551 / Oshkosh).